The following is a 338-amino-acid chain: Aspartate carbamoyltransferase catalytic subunit (338 aa).

Positions 59 and 60 each coordinate carbamoyl phosphate. L-aspartate is bound at residue lysine 87. Residues arginine 109, histidine 142, and glutamine 145 each contribute to the carbamoyl phosphate site. The L-aspartate site is built by arginine 182 and arginine 253. Carbamoyl phosphate contacts are provided by glycine 294 and proline 295.

It belongs to the aspartate/ornithine carbamoyltransferase superfamily. ATCase family. Heterododecamer (2C3:3R2) of six catalytic PyrB chains organized as two trimers (C3), and six regulatory PyrI chains organized as three dimers (R2).

It carries out the reaction carbamoyl phosphate + L-aspartate = N-carbamoyl-L-aspartate + phosphate + H(+). It participates in pyrimidine metabolism; UMP biosynthesis via de novo pathway; (S)-dihydroorotate from bicarbonate: step 2/3. Catalyzes the condensation of carbamoyl phosphate and aspartate to form carbamoyl aspartate and inorganic phosphate, the committed step in the de novo pyrimidine nucleotide biosynthesis pathway. The chain is Aspartate carbamoyltransferase catalytic subunit from Prochlorococcus marinus (strain MIT 9301).